The following is a 95-amino-acid chain: Aspartyl/glutamyl-tRNA(Asn/Gln) amidotransferase subunit C (95 aa).

This sequence belongs to the GatC family. In terms of assembly, heterotrimer of A, B and C subunits.

The catalysed reaction is L-glutamyl-tRNA(Gln) + L-glutamine + ATP + H2O = L-glutaminyl-tRNA(Gln) + L-glutamate + ADP + phosphate + H(+). It catalyses the reaction L-aspartyl-tRNA(Asn) + L-glutamine + ATP + H2O = L-asparaginyl-tRNA(Asn) + L-glutamate + ADP + phosphate + 2 H(+). Allows the formation of correctly charged Asn-tRNA(Asn) or Gln-tRNA(Gln) through the transamidation of misacylated Asp-tRNA(Asn) or Glu-tRNA(Gln) in organisms which lack either or both of asparaginyl-tRNA or glutaminyl-tRNA synthetases. The reaction takes place in the presence of glutamine and ATP through an activated phospho-Asp-tRNA(Asn) or phospho-Glu-tRNA(Gln). This is Aspartyl/glutamyl-tRNA(Asn/Gln) amidotransferase subunit C from Roseobacter denitrificans (strain ATCC 33942 / OCh 114) (Erythrobacter sp. (strain OCh 114)).